The primary structure comprises 820 residues: Nuclear pore complex protein Nup93 (820 aa).

It belongs to the nucleoporin interacting component (NIC) family.

Its subcellular location is the nucleus membrane. The protein localises to the nucleus. It localises to the nuclear pore complex. Its function is as follows. Plays a role in the nuclear pore complex (NPC) assembly and/or maintenance. In Danio rerio (Zebrafish), this protein is Nuclear pore complex protein Nup93 (dye).